Consider the following 375-residue polypeptide: Queuine tRNA-ribosyltransferase (375 aa).

The active-site Proton acceptor is the aspartate 89. Substrate is bound by residues 89-93, aspartate 143, glutamine 187, and glycine 214; that span reads DSGGF. The tract at residues 245–251 is RNA binding; sequence GVGKPED. The Nucleophile role is filled by aspartate 264. The interval 269-273 is RNA binding; important for wobble base 34 recognition; the sequence is TRNAR. 4 residues coordinate Zn(2+): cysteine 302, cysteine 304, cysteine 307, and histidine 333.

The protein belongs to the queuine tRNA-ribosyltransferase family. As to quaternary structure, homodimer. Within each dimer, one monomer is responsible for RNA recognition and catalysis, while the other monomer binds to the replacement base PreQ1. Zn(2+) is required as a cofactor.

The enzyme catalyses 7-aminomethyl-7-carbaguanine + guanosine(34) in tRNA = 7-aminomethyl-7-carbaguanosine(34) in tRNA + guanine. It participates in tRNA modification; tRNA-queuosine biosynthesis. Functionally, catalyzes the base-exchange of a guanine (G) residue with the queuine precursor 7-aminomethyl-7-deazaguanine (PreQ1) at position 34 (anticodon wobble position) in tRNAs with GU(N) anticodons (tRNA-Asp, -Asn, -His and -Tyr). Catalysis occurs through a double-displacement mechanism. The nucleophile active site attacks the C1' of nucleotide 34 to detach the guanine base from the RNA, forming a covalent enzyme-RNA intermediate. The proton acceptor active site deprotonates the incoming PreQ1, allowing a nucleophilic attack on the C1' of the ribose to form the product. After dissociation, two additional enzymatic reactions on the tRNA convert PreQ1 to queuine (Q), resulting in the hypermodified nucleoside queuosine (7-(((4,5-cis-dihydroxy-2-cyclopenten-1-yl)amino)methyl)-7-deazaguanosine). This is Queuine tRNA-ribosyltransferase from Shigella flexneri serotype 5b (strain 8401).